The chain runs to 367 residues: Serine/threonine-protein kinase Sgk2 (367 aa).

The segment at 1-28 is disordered; that stretch reads MASSPVGVPSPQPSRANGNINLGPSANP. Serine 10 bears the Phosphoserine mark. The segment covering 15–28 has biased composition (polar residues); that stretch reads RANGNINLGPSANP. Residues 35–292 enclose the Protein kinase domain; the sequence is FDFLKVIGKG…FLDIKNHMFF (258 aa). ATP-binding positions include 41 to 49 and lysine 64; that span reads IGKGNYGKV. The Nuclear localization signal signature appears at 68–78; sequence KKSILKNKEQN. The active-site Proton acceptor is aspartate 159. Threonine 193 carries the post-translational modification Phosphothreonine; by PDPK1. The 75-residue stretch at 293-367 folds into the AGC-kinase C-terminal domain; the sequence is SPINWDDLYH…AQDDDDILDS (75 aa). Residues serine 334 and serine 356 each carry the phosphoserine modification. Tyrosine 357 bears the Phosphotyrosine mark.

Belongs to the protein kinase superfamily. AGC Ser/Thr protein kinase family. Post-translationally, activated by phosphorylation on Ser-356 by an unknown kinase (may be mTORC2 but not confirmed), transforming it into a substrate for PDPK1 which then phosphorylates it on Thr-193.

It is found in the cytoplasm. It localises to the nucleus. The catalysed reaction is L-seryl-[protein] + ATP = O-phospho-L-seryl-[protein] + ADP + H(+). The enzyme catalyses L-threonyl-[protein] + ATP = O-phospho-L-threonyl-[protein] + ADP + H(+). With respect to regulation, two specific sites, one in the kinase domain (Thr-193) and the other in the C-terminal regulatory region (Ser-356), need to be phosphorylated for its full activation. Serine/threonine-protein kinase which is involved in the regulation of a wide variety of ion channels, membrane transporters, cell growth, survival and proliferation. Up-regulates Na(+) channels: SCNN1A/ENAC, K(+) channels: KCNA3/Kv1.3, KCNE1 and KCNQ1, amino acid transporter: SLC6A19, glutamate transporter: SLC1A6/EAAT4, glutamate receptors: GRIA1/GLUR1 and GRIK2/GLUR6, Na(+)/H(+) exchanger: SLC9A3/NHE3, and the Na(+)/K(+) ATPase. The sequence is that of Serine/threonine-protein kinase Sgk2 (Sgk2) from Mus musculus (Mouse).